Here is a 436-residue protein sequence, read N- to C-terminus: EPS I polysaccharide export inner membrane protein EpsE (436 aa).

The next 12 membrane-spanning stretches (helical) occupy residues 20-40 (VLGL…NIML), 49-69 (FGLF…LATG), 91-111 (LCAF…ALYL), 132-152 (MAAI…FLYA), 160-180 (ASVS…MGPI), 184-204 (VVAL…QLVI), 234-254 (VLTT…LAAM), 261-281 (LALF…PATL), 307-327 (ALLF…LLAG), 341-361 (AAAS…SVLL), 375-395 (FAMA…ALRL), and 396-416 (GYGA…LILF).

To E.coli bicyclomycin resistance protein (BCR).

Its subcellular location is the cell inner membrane. Its function is as follows. Probably involved in polymerization and/or export of exopolysaccharide EPS I which functions as a virulence factor. May play a role in export of EPS I or its intermediates across the membranes. This is EPS I polysaccharide export inner membrane protein EpsE (epsE) from Ralstonia nicotianae (strain ATCC BAA-1114 / GMI1000) (Ralstonia solanacearum).